We begin with the raw amino-acid sequence, 764 residues long: Thyrotropin receptor (764 aa).

Residues 1 to 21 (MSLTPLLQLALLLALPRSLRG) form the signal peptide. Residues 22–413 (KGCPSPPCEC…EFNPCEDIMG (392 aa)) are Extracellular-facing. C31 and C41 form a disulfide bridge. N77 and N99 each carry an N-linked (GlcNAc...) asparagine glycan. LRR repeat units follow at residues 125–150 (LPLL…VYST), 151–174 (DVFF…AFQG), 176–199 (CNET…AFNG), 201–223 (KLDA…AFGG), 225–248 (FSGP…GLEH), and 250–271 (KELI…SFLH). N-linked (GlcNAc...) asparagine glycosylation is found at N177 and N198. A glycan (N-linked (GlcNAc...) asparagine) is linked at N302. Y385 bears the Sulfotyrosine mark. Residues 414-441 (YRFLRIVVWFVSLLALLGNVFVLVILLT) form a helical membrane-spanning segment. Topologically, residues 442 to 450 (SHYKLTVPR) are cytoplasmic. The chain crosses the membrane as a helical span at residues 451 to 473 (FLMCNLAFADFCMGMYLLLIASV). The Extracellular segment spans residues 474 to 494 (DLYTQSEYYNHAIDWQTGPGC). Cysteines 494 and 569 form a disulfide. The helical transmembrane segment at 495–517 (NTAGFFTVFASELSVYTLTVITL) threads the bilayer. At 518–537 (ERWYAITFAMRLDRKIRLRH) the chain is on the cytoplasmic side. Residues 538–560 (AYAIMAGGWVCCFLLALLPLVGI) form a helical membrane-spanning segment. Residues 561–580 (SSYAKVSICLPMDTETPLAL) lie on the Extracellular side of the membrane. The helical transmembrane segment at 581-602 (AYIILVLLLNIVAFTIVCSCYV) threads the bilayer. Over 603–625 (KIYITVRNPQYNPGDKDTKIAKR) the chain is Cytoplasmic. A helical transmembrane segment spans residues 626-649 (MAVLIFTDFMCMAPISFYALSALM). The Extracellular portion of the chain corresponds to 650-660 (NKPLITVTNSK). Residues 661–682 (ILLVLFYPLNSCANPFLYAIFT) form a helical membrane-spanning segment. Topologically, residues 683–764 (KAFQRDVFIL…ISKEYKQPVL (82 aa)) are cytoplasmic. A PDZ-binding motif is present at residues 762–764 (PVL).

Belongs to the G-protein coupled receptor 1 family. FSH/LSH/TSH subfamily. As to quaternary structure, interacts with heterodimer GPHA2:GPHB5; this interaction stimulates cAMP production. Interacts (via the PDZ-binding motif) with SCRIB; regulates TSHR trafficking and function. Glycosylated. In terms of processing, sulfated. Sulfation on Tyr-385 plays a role in thyrotropin receptor binding and activation. As to expression, expressed in thyroide cells (at protein level).

It is found in the cell membrane. It localises to the basolateral cell membrane. In terms of biological role, receptor for the thyroid-stimulating hormone (TSH) or thyrotropin. Also acts as a receptor for the heterodimeric glycoprotein hormone (GPHA2:GPHB5) or thyrostimulin. The activity of this receptor is mediated by G proteins which activate adenylate cyclase. Plays a central role in controlling thyroid cell metabolism. This is Thyrotropin receptor (TSHR) from Sus scrofa (Pig).